We begin with the raw amino-acid sequence, 336 residues long: MRIRSATPSLILLVIAIVFFVLAICTPPLANNLTLGKYGDVRFGVFGYCLNSNCSKPLVGYNSDYLDEHAKDGFRTSVIVRQRASYGLVIVPVSACICLISTIMTIFAHIGAIARSPGFFNVIGTITFFNIFITAIAFVICVITFVPHIQWPSWLVLANVGIQLIVLLLLLVARRQATRLQAKHLRRATSGSLGYNPYSLQNSSNIFSTSSRKGDLPKFSDYSAEKPMYDTISEDDGLKRGGSVSKLKPTFSNDSRSLSSYAPTVREPVPVPKSNSGFRFPFMRNKPAEQAPENPFRDPENPFKDPASAPAPNPWSINDVQANNDKKPSRFSWGRS.

Residues 232 to 336 form a disordered region; sequence ISEDDGLKRG…KPSRFSWGRS (105 aa). A compositionally biased stretch (polar residues) spans 250 to 262; it reads TFSNDSRSLSSYA.

It localises to the cytoplasm. Its function is as follows. Has a role in meiosis. The polypeptide is Meiotically up-regulated gene 33 protein (mug33) (Schizosaccharomyces pombe (strain 972 / ATCC 24843) (Fission yeast)).